Consider the following 453-residue polypeptide: MAVALLFILVIGMMIVGVPIAISLGLSSILFLLWHSDASLASVAQTLFNAFAGHYTLLAIPFFILASTFMSTGGVAKRIIRFAIAMVGWFRGGLAIASVVACMMFAALSGSSPATVVAIGSIVIAGMVKNGYSKEFAAGVICNAGTLGILIPPSIVMVVYSAATNVSVGRMFLGGVVPGLLAGLMLIIAIYITARIKNLPKQPFVGWKEALKAAKEASWGLLLVVIILGGIYGGIFTPTEAAAVAAVYSFFIANFIYRDMGPFADKTNTKPVLVKVVETFVHKDTKATLYDAGKLTIMLMFIIANALILKHVLTEERIPQMITESMLSAGLGPITFLIVVNLILLVGGQFMEPSGLLVIVAPLVFPIAIALGIDPIHLGIMMVVNMEIGMITPPVGLNLFVTSGVAKMSMMNVVKAALPWVGVMFLFLIIVTYVPWVSTWLPTLLMGPEIITR.

Helical transmembrane passes span 2-22 (AVAL…PIAI), 50-70 (AFAG…STFM), 82-102 (FAIA…VVAC), 104-124 (MFAA…SIVI), 139-159 (GVIC…VMVV), 172-192 (FLGG…AIYI), 217-237 (ASWG…GIFT), 243-263 (AVAA…MGPF), 289-309 (LYDA…ALIL), 326-346 (MLSA…ILLV), 356-376 (LLVI…IDPI), 380-400 (IMMV…LNLF), and 417-437 (ALPW…VPWV).

Belongs to the TRAP transporter large permease family. In terms of assembly, the complex comprises the extracytoplasmic solute receptor protein DctP, and the two transmembrane proteins DctQ and DctM.

It localises to the cell inner membrane. Part of the tripartite ATP-independent periplasmic (TRAP) transport system DctPQM involved in C4-dicarboxylates uptake. This is C4-dicarboxylate TRAP transporter large permease protein DctM from Vibrio cholerae serotype O1 (strain ATCC 39315 / El Tor Inaba N16961).